A 194-amino-acid polypeptide reads, in one-letter code: Imidazoleglycerol-phosphate dehydratase (194 aa).

It belongs to the imidazoleglycerol-phosphate dehydratase family.

It localises to the cytoplasm. The enzyme catalyses D-erythro-1-(imidazol-4-yl)glycerol 3-phosphate = 3-(imidazol-4-yl)-2-oxopropyl phosphate + H2O. Its pathway is amino-acid biosynthesis; L-histidine biosynthesis; L-histidine from 5-phospho-alpha-D-ribose 1-diphosphate: step 6/9. This chain is Imidazoleglycerol-phosphate dehydratase, found in Lactiplantibacillus plantarum (strain ATCC BAA-793 / NCIMB 8826 / WCFS1) (Lactobacillus plantarum).